The primary structure comprises 317 residues: Cytochrome f (317 aa).

Positions 1–34 (MKGLKNQIMKKTSLFICTLLFILSIVFYPKITFA) are cleaved as a signal peptide. The heme site is built by Tyr-35, Cys-55, Cys-58, and His-59. Residues 284–304 (VIGLIAFFIGVGLTQILLVLK) form a helical membrane-spanning segment.

Belongs to the cytochrome f family. In terms of assembly, the 4 large subunits of the cytochrome b6-f complex are cytochrome b6, subunit IV (17 kDa polypeptide, PetD), cytochrome f and the Rieske protein, while the 4 small subunits are PetG, PetL, PetM and PetN. The complex functions as a dimer. The cofactor is heme.

It is found in the cellular thylakoid membrane. In terms of biological role, component of the cytochrome b6-f complex, which mediates electron transfer between photosystem II (PSII) and photosystem I (PSI), cyclic electron flow around PSI, and state transitions. The protein is Cytochrome f of Prochlorococcus marinus (strain MIT 9215).